We begin with the raw amino-acid sequence, 201 residues long: NADH-quinone oxidoreductase subunit C 1 (201 aa).

Belongs to the complex I 30 kDa subunit family. In terms of assembly, NDH-1 is composed of 14 different subunits. Subunits NuoB, C, D, E, F, and G constitute the peripheral sector of the complex.

It localises to the cell inner membrane. It catalyses the reaction a quinone + NADH + 5 H(+)(in) = a quinol + NAD(+) + 4 H(+)(out). Its function is as follows. NDH-1 shuttles electrons from NADH, via FMN and iron-sulfur (Fe-S) centers, to quinones in the respiratory chain. The immediate electron acceptor for the enzyme in this species is believed to be ubiquinone. Couples the redox reaction to proton translocation (for every two electrons transferred, four hydrogen ions are translocated across the cytoplasmic membrane), and thus conserves the redox energy in a proton gradient. The polypeptide is NADH-quinone oxidoreductase subunit C 1 (Rhizobium meliloti (strain 1021) (Ensifer meliloti)).